Reading from the N-terminus, the 136-residue chain is Large-conductance mechanosensitive channel (136 aa).

The next 4 membrane-spanning stretches (helical) occupy residues 9–29 (AFASRGNVIDMAVGIIIGAAF), 32–52 (IVSSFVADIIMPPIGIILGGV), 54–74 (FSDLSFVLLAAQGDAPAVVIA), and 79–99 (IQTVVDFTIIAFAIFMGLKAI).

The protein belongs to the MscL family. As to quaternary structure, homopentamer.

The protein resides in the cell inner membrane. Its function is as follows. Channel that opens in response to stretch forces in the membrane lipid bilayer. May participate in the regulation of osmotic pressure changes within the cell. This chain is Large-conductance mechanosensitive channel, found in Vibrio cholerae serotype O1 (strain ATCC 39541 / Classical Ogawa 395 / O395).